The sequence spans 518 residues: PTS system mannitol-specific EIICB component (518 aa).

Residues 1-31 (MDTMSNSQQNKGIGRKVQAFGSFLSSMIMPN) are Cytoplasmic-facing. The 333-residue stretch at 20–352 (FGSFLSSMIM…LKFTKDPKQD (333 aa)) folds into the PTS EIIC type-2 domain. Residues 32–53 (IGAFIAWGFIAAIFIDNGWFPN) form a helical membrane-spanning segment. Over 54-57 (KDLA) the chain is Extracellular. A helical membrane pass occupies residues 58 to 78 (QLAGPMITYLIPLLIAFSGGR). The Cytoplasmic portion of the chain corresponds to 79–142 (LIHDLRGGII…QGFEMLFNNF (64 aa)). Residues 143-164 (SAGILGFIMTIFGFEVLAPIMK) traverse the membrane as a helical segment. The Extracellular portion of the chain corresponds to 165–173 (FIMHILSVG). The helical transmembrane segment at 174-194 (VEALVHAHLLPLVSILVEPAK) threads the bilayer. Residues 195–281 (IVFLNNAINH…VLMRPLLFVS (87 aa)) are Cytoplasmic-facing. The chain crosses the membrane as a helical span at residues 282–301 (VILGGMTGVATYSLLDFGFK). Residues 302-321 (TPASPGSIIVYAINAPKGEF) are Extracellular-facing. The chain crosses the membrane as a helical span at residues 322–343 (LHMLTGVVLAALVSFVVSALIL). At 344–518 (KFTKDPKQDL…LINNLKEDQD (175 aa)) the chain is on the cytoplasmic side. Residues 369–406 (SVASKLSAKDDNKAADNKTAETTTATAASNKAEDKDSD) form a disordered region. Over residues 375–387 (SAKDDNKAADNKT) the composition is skewed to basic and acidic residues. Over residues 388 to 398 (AETTTATAASN) the composition is skewed to low complexity. The region spanning 426 to 518 (DHVIFACDAG…LINNLKEDQD (93 aa)) is the PTS EIIB type-2 domain. Cys432 (phosphocysteine intermediate) is an active-site residue. Cys432 is modified (phosphocysteine; by EIIA).

In terms of assembly, homodimer.

The protein resides in the cell membrane. It catalyses the reaction D-mannitol(out) + N(pros)-phospho-L-histidyl-[protein] = D-mannitol 1-phosphate(in) + L-histidyl-[protein]. Functionally, the phosphoenolpyruvate-dependent sugar phosphotransferase system (sugar PTS), a major carbohydrate active transport system, catalyzes the phosphorylation of incoming sugar substrates concomitantly with their translocation across the cell membrane. The enzyme II CmtAB PTS system is involved in D-mannitol transport. This chain is PTS system mannitol-specific EIICB component, found in Staphylococcus carnosus.